A 68-amino-acid chain; its full sequence is Arabinogalactan peptide 1 (68 aa).

A signal peptide spans 1–30 (MAGQLKSKIVAVAVAAVVVVASSLVGTASA). A lipid anchor (GPI-anchor amidated serine) is attached at S40. The propeptide at 41–68 (GATATAAAAPAFAAVSVAAAALGGYLFC) is removed in mature form.

Belongs to the AG-peptide AGP family. In terms of processing, O-glycosylated on hydroxyprolines; noncontiguous hydroxylproline residues are glycosylated with arabinogalactan. In terms of tissue distribution, expressed in roots, stems, flowers and seeds.

It is found in the vacuole. The protein localises to the aleurone grain membrane. In terms of biological role, proteoglycan that seems to be implicated in diverse developmental roles such as differentiation, cell-cell recognition, embryogenesis and programmed cell death. This Oryza sativa subsp. japonica (Rice) protein is Arabinogalactan peptide 1 (AGPEP1).